The primary structure comprises 249 residues: Ubiquinone/menaquinone biosynthesis C-methyltransferase UbiE (249 aa).

S-adenosyl-L-methionine-binding positions include T72, D93, and 121-122 (NA).

This sequence belongs to the class I-like SAM-binding methyltransferase superfamily. MenG/UbiE family.

It catalyses the reaction a 2-demethylmenaquinol + S-adenosyl-L-methionine = a menaquinol + S-adenosyl-L-homocysteine + H(+). The catalysed reaction is a 2-methoxy-6-(all-trans-polyprenyl)benzene-1,4-diol + S-adenosyl-L-methionine = a 5-methoxy-2-methyl-3-(all-trans-polyprenyl)benzene-1,4-diol + S-adenosyl-L-homocysteine + H(+). It participates in quinol/quinone metabolism; menaquinone biosynthesis; menaquinol from 1,4-dihydroxy-2-naphthoate: step 2/2. It functions in the pathway cofactor biosynthesis; ubiquinone biosynthesis. Its function is as follows. Methyltransferase required for the conversion of demethylmenaquinol (DMKH2) to menaquinol (MKH2) and the conversion of 2-polyprenyl-6-methoxy-1,4-benzoquinol (DDMQH2) to 2-polyprenyl-3-methyl-6-methoxy-1,4-benzoquinol (DMQH2). This Hahella chejuensis (strain KCTC 2396) protein is Ubiquinone/menaquinone biosynthesis C-methyltransferase UbiE.